A 620-amino-acid polypeptide reads, in one-letter code: Chaperone protein HtpG (620 aa).

Residues 1–334 form an a; substrate-binding region; that stretch reads MTTTDTAPQS…SEDLPLNLSR (334 aa). The interval 335–548 is b; the sequence is EMLQNNPQLA…GLGPDRALER (214 aa). The segment at 549–620 is c; it reads MLAQQNRGAA…RLNRLVLRAL (72 aa).

This sequence belongs to the heat shock protein 90 family. In terms of assembly, homodimer.

The protein localises to the cytoplasm. Molecular chaperone. Has ATPase activity. The sequence is that of Chaperone protein HtpG from Rhodopseudomonas palustris (strain BisB18).